A 290-amino-acid polypeptide reads, in one-letter code: Forkhead box protein O3B (290 aa).

Disordered regions lie at residues 1–30 (METD…TEEG) and 44–239 (AAAA…SSRR). Low complexity-rich tracts occupy residues 44-59 (AAAA…RGVH) and 75-91 (RTPA…EAPA). T117 carries the phosphothreonine; by PKB/AKT1 modification. Acidic residues predominate over residues 142–153 (IPEEEDDEDDED). Residues 242-290 (WGNLSYADLITRAIESSPDRRLTLSQIYEWMVSCVPYFKDKGNSNSSAG) constitute a DNA-binding region (fork-head).

The protein resides in the cytoplasm. The protein localises to the cytosol. In terms of biological role, transcription factor. This Homo sapiens (Human) protein is Forkhead box protein O3B.